A 195-amino-acid polypeptide reads, in one-letter code: Nucleoside triphosphate pyrophosphatase (195 aa).

Asp-70 functions as the Proton acceptor in the catalytic mechanism.

The protein belongs to the Maf family. A divalent metal cation is required as a cofactor.

The protein resides in the cytoplasm. The enzyme catalyses a ribonucleoside 5'-triphosphate + H2O = a ribonucleoside 5'-phosphate + diphosphate + H(+). The catalysed reaction is a 2'-deoxyribonucleoside 5'-triphosphate + H2O = a 2'-deoxyribonucleoside 5'-phosphate + diphosphate + H(+). Functionally, nucleoside triphosphate pyrophosphatase. May have a dual role in cell division arrest and in preventing the incorporation of modified nucleotides into cellular nucleic acids. In Synechocystis sp. (strain ATCC 27184 / PCC 6803 / Kazusa), this protein is Nucleoside triphosphate pyrophosphatase.